An 862-amino-acid polypeptide reads, in one-letter code: Aldehyde-alcohol dehydrogenase (862 aa).

Cysteine 244 is an active-site residue. An NAD(+)-binding site is contributed by 420–425 (GFWGGN).

This sequence in the N-terminal section; belongs to the aldehyde dehydrogenase family. The protein in the C-terminal section; belongs to the iron-containing alcohol dehydrogenase family.

It catalyses the reaction a primary alcohol + NAD(+) = an aldehyde + NADH + H(+). The catalysed reaction is a secondary alcohol + NAD(+) = a ketone + NADH + H(+). It carries out the reaction an aldehyde + NAD(+) + H2O = a carboxylate + NADH + 2 H(+). Has both aldehyde and alcohol dehydrogenase activities. Can use acetaldehyde, butyraldehyde, butanol and ethanol. The polypeptide is Aldehyde-alcohol dehydrogenase (Clostridium acetobutylicum (strain ATCC 824 / DSM 792 / JCM 1419 / IAM 19013 / LMG 5710 / NBRC 13948 / NRRL B-527 / VKM B-1787 / 2291 / W)).